The following is a 39-amino-acid chain: TFINVKCTSPKQCLKPCKDLYGPHAGEKCMNGKCKCYKP.

3 disulfide bridges follow: cysteine 7–cysteine 29, cysteine 13–cysteine 34, and cysteine 17–cysteine 36.

In terms of tissue distribution, expressed by the venom gland.

The protein localises to the secreted. Blocks human voltage-gated potassium (Kv) channels Kv1.1/KCNA1, Kv1.2/KCNA2 and Kv1.3/KCNA3. In Centruroides bonito (Scorpion), this protein is Potassium channel toxin alpha-KTx 2.23.